The chain runs to 430 residues: tRNA pseudouridine synthase Pus10 (430 aa).

D253 acts as the Nucleophile in catalysis. Residues Y320 and Y392 each coordinate substrate.

It belongs to the pseudouridine synthase Pus10 family.

It catalyses the reaction uridine(54) in tRNA = pseudouridine(54) in tRNA. The catalysed reaction is uridine(55) in tRNA = pseudouridine(55) in tRNA. In terms of biological role, responsible for synthesis of pseudouridine from uracil-54 and uracil-55 in the psi GC loop of transfer RNAs. This Ignisphaera aggregans (strain DSM 17230 / JCM 13409 / AQ1.S1) protein is tRNA pseudouridine synthase Pus10.